Here is a 483-residue protein sequence, read N- to C-terminus: Altronate oxidoreductase (483 aa).

Residue 18-29 (IIQFGEGNFLRA) participates in NAD(+) binding.

This sequence belongs to the mannitol dehydrogenase family. UxaB subfamily.

It carries out the reaction D-altronate + NAD(+) = keto-D-tagaturonate + NADH + H(+). Its pathway is carbohydrate metabolism; pentose and glucuronate interconversion. This Shigella flexneri serotype 5b (strain 8401) protein is Altronate oxidoreductase.